Consider the following 315-residue polypeptide: L-lactate dehydrogenase (315 aa).

Residues valine 16, aspartate 37, and 81–82 (GA) contribute to the NAD(+) site. Residues glutamine 84, arginine 90, and 122-125 (NPVD) each bind substrate. Residues 120 to 122 (VSN) and serine 145 each bind NAD(+). 150-153 (DTAR) contributes to the substrate binding site. Positions 155 and 170 each coordinate beta-D-fructose 1,6-bisphosphate. The active-site Proton acceptor is histidine 177. Position 224 is a phosphotyrosine (tyrosine 224). Threonine 233 provides a ligand contact to substrate.

The protein belongs to the LDH/MDH superfamily. LDH family. In terms of assembly, homotetramer.

The protein resides in the cytoplasm. It carries out the reaction (S)-lactate + NAD(+) = pyruvate + NADH + H(+). It functions in the pathway fermentation; pyruvate fermentation to lactate; (S)-lactate from pyruvate: step 1/1. With respect to regulation, allosterically activated by fructose 1,6-bisphosphate (FBP). In terms of biological role, catalyzes the conversion of lactate to pyruvate. The protein is L-lactate dehydrogenase of Treponema denticola (strain ATCC 35405 / DSM 14222 / CIP 103919 / JCM 8153 / KCTC 15104).